The sequence spans 167 residues: Large ribosomal subunit protein uL10 (167 aa).

Belongs to the universal ribosomal protein uL10 family. In terms of assembly, part of the ribosomal stalk of the 50S ribosomal subunit. The N-terminus interacts with L11 and the large rRNA to form the base of the stalk. The C-terminus forms an elongated spine to which L12 dimers bind in a sequential fashion forming a multimeric L10(L12)X complex.

Its function is as follows. Forms part of the ribosomal stalk, playing a central role in the interaction of the ribosome with GTP-bound translation factors. The polypeptide is Large ribosomal subunit protein uL10 (Lactiplantibacillus plantarum (strain ATCC BAA-793 / NCIMB 8826 / WCFS1) (Lactobacillus plantarum)).